A 152-amino-acid polypeptide reads, in one-letter code: Bacchus (152 aa).

Over residues 29 to 41 (DLKAKAAAEDKAA) the composition is skewed to basic and acidic residues. The segment at 29–152 (DLKAKAAAED…DDGSGSDDQA (124 aa)) is disordered. Residues 42-51 (AADAAGDAAD) are compositionally biased toward low complexity. Residues 72-89 (ESVKGTKRPAEAKSAESK) are compositionally biased toward basic and acidic residues. A compositionally biased stretch (acidic residues) spans 99–152 (GDSDEEEALEEIIEGDSEIESDEYDIPYDGEEDDIECDDDDDDNDDGSGSDDQA).

As to expression, expressed in the brain.

The protein resides in the nucleus. Functionally, negatively regulates tyramine beta-hydroxylase tbh and thus the conversion of tyramine (TA) to octopamine (OA). In tyrosine decarboxylase 2 (Tdc2) neurons, acts in an amine-mediated signaling pathway to negatively regulate acute ethanol sensitivity probably via tbh-mediated depletion of TA. The chain is Bacchus from Drosophila melanogaster (Fruit fly).